Consider the following 496-residue polypeptide: Adenosine transporter 1 (496 aa).

The Cytoplasmic segment spans residues 1-26; sequence MSSHTSTPNHASAAPPRKWYDMTSAE. The chain crosses the membrane as a helical span at residues 27–47; it reads FYVYVVAFMCGISMLMPINAV. Residues 48–77 lie on the Extracellular side of the membrane; that stretch reads FSAPSYMLQYYLYATKDPNHVPQMTNFWSN. A helical membrane pass occupies residues 78 to 98; that stretch reads VMTYYNLIGLVTGLVMEPLTL. The Cytoplasmic segment spans residues 99 to 107; sequence LKSFRKIPM. Residues 108–128 form a helical membrane-spanning segment; it reads LVRLLGGLCILIVEIIVLMAV. Over 129 to 135 the chain is Extracellular; sequence PARGTTE. The chain crosses the membrane as a helical span at residues 136–156; that stretch reads GGAVATMCIAGFIGGLGKSIF. Over 157–172 the chain is Cytoplasmic; it reads ESTVYGMFGAFPPSFT. A helical membrane pass occupies residues 173 to 193; that stretch reads SIMMGGVGISGVLTSLIQIIV. The Extracellular segment spans residues 194-208; sequence KAALPDTYEGVKKQS. A helical membrane pass occupies residues 209–229; that stretch reads YIYYSLDVGIQAATFIALIMM. Over 230 to 336 the chain is Cytoplasmic; the sequence is RFNSFAQLHF…SIISVLRSIK (107 aa). The chain crosses the membrane as a helical span at residues 337-357; the sequence is WMFVSCAFVFVVTLFLFPGIA. Over 358 to 365 the chain is Extracellular; it reads TGMFPESK. The chain crosses the membrane as a helical span at residues 366-386; sequence WFATVAVFIFNCCDVLGRVAP. Topologically, residues 387 to 399 are cytoplasmic; it reads ALRFMWPRSYNQR. The helical transmembrane segment at 400-420 threads the bilayer; that stretch reads WIIVAASFARVIFVPLLLLYS. The Extracellular segment spans residues 421-431; it reads YHYIPSEAYGY. Residues 432–452 traverse the membrane as a helical segment; sequence VIMVIFGFSSGYVASMSLTLG. The Cytoplasmic segment spans residues 453-464; that stretch reads PQSKGIDNDGKR. A helical membrane pass occupies residues 465-485; the sequence is FVAGTLMGISILVGGTIGTVL. Topologically, residues 486-496 are extracellular; the sequence is SIMTQTIREKY.

This sequence belongs to the SLC29A/ENT transporter (TC 2.A.57) family.

It localises to the membrane. It carries out the reaction adenosine(in) = adenosine(out). In terms of biological role, adenosine transporter. The polypeptide is Adenosine transporter 1 (Crithidia fasciculata).